We begin with the raw amino-acid sequence, 151 residues long: Prefoldin subunit alpha (151 aa).

This sequence belongs to the prefoldin subunit alpha family. In terms of assembly, heterohexamer of two alpha and four beta subunits.

It is found in the cytoplasm. In terms of biological role, molecular chaperone capable of stabilizing a range of proteins. Seems to fulfill an ATP-independent, HSP70-like function in archaeal de novo protein folding. The chain is Prefoldin subunit alpha (pfdA) from Aeropyrum pernix (strain ATCC 700893 / DSM 11879 / JCM 9820 / NBRC 100138 / K1).